The sequence spans 152 residues: Superoxide dismutase [Cu-Zn] 2 (152 aa).

Residues asparagine 9 and asparagine 33 are each glycosylated (N-linked (GlcNAc...) asparagine). Residues histidine 45, histidine 47, and histidine 62 each contribute to the Cu cation site. A disulfide bridge connects residues cysteine 56 and cysteine 145. The Zn(2+) site is built by histidine 62, histidine 70, histidine 79, and aspartate 82. N-linked (GlcNAc...) asparagine glycosylation occurs at asparagine 85. Histidine 119 contributes to the Cu cation binding site.

This sequence belongs to the Cu-Zn superoxide dismutase family. Requires Cu cation as cofactor. Zn(2+) serves as cofactor. In terms of tissue distribution, expressed in fruits, leaves and pollen grains.

The protein resides in the cytoplasm. It is found in the endoplasmic reticulum. It carries out the reaction 2 superoxide + 2 H(+) = H2O2 + O2. With respect to regulation, inhibited by KCN and H(2)O(2). Functionally, destroys radicals which are normally produced within the cells and which are toxic to biological systems. Probably involved in the protection against oxidative stress during pollen development. In Olea europaea (Common olive), this protein is Superoxide dismutase [Cu-Zn] 2 (OLE5).